The chain runs to 1321 residues: Bile salt export pump (1321 aa).

Residues 1-62 (MSDSVILRSV…FSSSKDNWLM (62 aa)) are Cytoplasmic-facing. The ABC transmembrane type-1 1 domain occupies 62–385 (MFMGSVCALL…ASSCLEIFST (324 aa)). A helical transmembrane segment spans residues 63 to 83 (FMGSVCALLHGMAQPGMIIVF). Residues 84–147 (GILTDIFVEY…VIKFSGIYAG (64 aa)) are Extracellular-facing. N109, N116, N122, and N125 each carry an N-linked (GlcNAc...) asparagine glycan. The chain crosses the membrane as a helical span at residues 148–168 (VGVAVLILGYFQIRLWVITGA). Residues 169–215 (RQIRKMRKFYFRRIMRMEIGWFDCTSVGELNSRFSDDINKIDEAIAD) lie on the Cytoplasmic side of the membrane. Residues 216–236 (QMALFLQRLSTALSGLLLGFY) form a helical membrane-spanning segment. The Extracellular segment spans residues 237-240 (RGWK). A helical membrane pass occupies residues 241-261 (LTLVILAVSPLIGIGAAVIGL). Residues 262–319 (SVAKFTELELKAYAKAGSIADEVLSSIRTVAAFGGENKEVERYEKNLMFAQRWGIWKG) lie on the Cytoplasmic side of the membrane. The chain crosses the membrane as a helical span at residues 320–340 (MVMGFFTGYMWCLIFFCYALA). At 341-353 (FWYGSRLVLDEGE) the chain is on the extracellular side. A helical membrane pass occupies residues 354 to 374 (YTPGTLIQIFLCVIIAAMNIG). Over 375–755 (NASSCLEIFS…KYNISEWPYI (381 aa)) the chain is Cytoplasmic. Positions 420-656 (IEFHNVTFHY…KGVYFMLVTL (237 aa)) constitute an ABC transporter 1 domain. 455-462 (GSSGAGKS) serves as a coordination point for ATP. T586 bears the Phosphothreonine mark. The residue at position 587 (S587) is a Phosphoserine. The interaction with HAX1 stretch occupies residues 651–674 (FMLVTLQSQEDNTHKETGIKGKDT). The span at 662 to 684 (NTHKETGIKGKDTTEGDTPERTF) shows a compositional bias: basic and acidic residues. Positions 662-722 (NTHKETGIKG…PLAIGDHKSS (61 aa)) are disordered. Residues S692, S703, and S706 each carry the phosphoserine modification. Residues 755-1043 (ILVGALCAAI…TFSYTPSYAK (289 aa)) enclose the ABC transmembrane type-1 2 domain. Residues 756–776 (LVGALCAAINGAVTPIYSLLF) form a helical membrane-spanning segment. Residues 777-794 (SQILKTFSLVDKEQQRSE) are Extracellular-facing. The helical transmembrane segment at 795–815 (IYSMCLFFVILGCVSLFTQFL) threads the bilayer. Over 816–869 (QGYNFAKSGELLTKRLRKFGFKAMLRQDIGWFDDLKNNPGVLTTRLATDASQVQ) the chain is Cytoplasmic. 2 helical membrane-spanning segments follow: residues 870 to 890 (GATGSQVGMMVNSFTNIFVAV) and 891 to 911 (LIAFLFNWKLSLVISVFFPFL). The Cytoplasmic segment spans residues 912–979 (ALSGAVQTKM…SYKTAIRKAN (68 aa)). The chain crosses the membrane as a helical span at residues 980-1000 (VYGLCYAFSQGISFLANSAAY). The Extracellular segment spans residues 1001–1011 (RYGGYLIVYED). Residues 1012-1032 (LNFSYVFRVVSSIAMSATAVG) traverse the membrane as a helical segment. The Cytoplasmic portion of the chain corresponds to 1033–1321 (RTFSYTPSYA…KLVITGAPIS (289 aa)). The region spanning 1078-1316 (IDFIDCKFTY…KGAYYKLVIT (239 aa)) is the ABC transporter 2 domain. 1113–1120 (GSSGCGKS) serves as a coordination point for ATP. Residue S1321 is modified to Phosphoserine.

The protein belongs to the ABC transporter superfamily. ABCB family. Multidrug resistance exporter (TC 3.A.1.201) subfamily. Interacts with HAX1. Interacts with the adapter protein complex 2 (AP-2) throught AP2A2 or AP2A1; this interaction regulates cell membrane expression of ABCB11 through its internalization in a clathrin-dependent manner and its subsequent degradation. N-glycosylated. In terms of processing, ubiquitinated; short-chain ubiquitination regulates cell-Surface expression of ABCB11. Expressed predominantly, if not exclusively in the liver, where it was further localized to the canalicular microvilli and to subcanalicular vesicles of the hepatocytes by in situ.

Its subcellular location is the apical cell membrane. The protein resides in the recycling endosome membrane. It localises to the endosome. The protein localises to the cell membrane. It carries out the reaction cholate(in) + ATP + H2O = cholate(out) + ADP + phosphate + H(+). The catalysed reaction is taurocholate(in) + ATP + H2O = taurocholate(out) + ADP + phosphate + H(+). It catalyses the reaction glycocholate(in) + ATP + H2O = glycocholate(out) + ADP + phosphate + H(+). The enzyme catalyses glycochenodeoxycholate(in) + ATP + H2O = glycochenodeoxycholate(out) + ADP + phosphate + H(+). It carries out the reaction taurochenodeoxycholate(in) + ATP + H2O = taurochenodeoxycholate(out) + ADP + phosphate + H(+). The catalysed reaction is glycoursodeoxycholate(in) + ATP + H2O = glycoursodeoxycholate(out) + ADP + phosphate + H(+). It catalyses the reaction tauroursodeoxycholate(in) + ATP + H2O = tauroursodeoxycholate(out) + ADP + phosphate + H(+). The enzyme catalyses taurodeoxycholate(in) + ATP + H2O = taurodeoxycholate(out) + ADP + phosphate + H(+). It carries out the reaction taurolithocholate 3-sulfate(in) + ATP + H2O = taurolithocholate 3-sulfate(out) + ADP + phosphate + H(+). The catalysed reaction is pravastatin(in) + ATP + H2O = pravastatin(out) + ADP + phosphate + H(+). With respect to regulation, the uptake of taurocholate is inhibited by taurolithocholate sulfate with an IC(50) of 9 uM. Pravastatin competitively inhibits the transport of taurocholic acid. Cyclosporin A, glibenclamide, rifampicin and troglitazonestrongly competitively inhibit the transport activity of taurocholate. The canalicular transport activity of taurocholate is strongly dependent on canalicular membrane cholesterol content. The uptake of taurocholate is increased by short- and medium-chain fatty acids. Cholesterol increases transport capacity of taurocholate without affecting the affinity for the substrate. Its function is as follows. Catalyzes the transport of the major hydrophobic bile salts, such as taurine and glycine-conjugated cholic acid across the canalicular membrane of hepatocytes in an ATP-dependent manner, therefore participates in hepatic bile acid homeostasis and consequently to lipid homeostasis through regulation of biliary lipid secretion in a bile salts dependent manner. Transports taurine-conjugated bile salts more rapidly than glycine-conjugated bile salts. Also transports non-bile acid compounds, such as pravastatin and fexofenadine in an ATP-dependent manner and may be involved in their biliary excretion. The protein is Bile salt export pump of Mus musculus (Mouse).